We begin with the raw amino-acid sequence, 177 residues long: Coatomer subunit zeta-1 (177 aa).

At Met-1 the chain carries N-acetylmethionine.

Belongs to the adaptor complexes small subunit family. As to quaternary structure, oligomeric complex that consists of at least the alpha, beta, beta', gamma, delta, epsilon and zeta subunits.

Its subcellular location is the cytoplasm. The protein resides in the golgi apparatus membrane. It localises to the cytoplasmic vesicle. It is found in the COPI-coated vesicle membrane. Functionally, the coatomer is a cytosolic protein complex that binds to dilysine motifs and reversibly associates with Golgi non-clathrin-coated vesicles, which further mediate biosynthetic protein transport from the ER, via the Golgi up to the trans Golgi network. Coatomer complex is required for budding from Golgi membranes, and is essential for the retrograde Golgi-to-ER transport of dilysine-tagged proteins. The zeta subunit may be involved in regulating the coat assembly and, hence, the rate of biosynthetic protein transport due to its association-dissociation properties with the coatomer complex. This Homo sapiens (Human) protein is Coatomer subunit zeta-1 (COPZ1).